Reading from the N-terminus, the 187-residue chain is UPF0301 protein HS_0009 (187 aa).

The protein belongs to the UPF0301 (AlgH) family.

The chain is UPF0301 protein HS_0009 from Histophilus somni (strain 129Pt) (Haemophilus somnus).